The following is an 806-amino-acid chain: Protein bimA (806 aa).

2 TPR repeats span residues 76-109 (LGCS…WTSR) and 127-160 (AAVL…NPFM). 3 disordered regions span residues 202–348 (VLPP…HRLG), 353–372 (TVSG…QGVG), and 401–460 (REVK…ASSK). Residues 224-237 (AGTTRSDSTSTHGS) are compositionally biased toward polar residues. Residues 246-257 (GSTVSVASSGTG) show a composition bias toward low complexity. The segment at 260–399 (LPREGMETPG…ISSTALGVKE (140 aa)) is bimA domain. The span at 328 to 348 (TKFESDEGHTERDAGMGHRLG) shows a compositional bias: basic and acidic residues. Over residues 408–421 (TTGNKARTTTSSNV) the composition is skewed to polar residues. A compositionally biased stretch (basic and acidic residues) spans 432-445 (HAGEIHDGDSKEYR). The span at 446–459 (GTSSTSNGSQNASS) shows a compositional bias: low complexity. 6 TPR repeats span residues 513–546 (PWVL…APSR), 581–614 (PEAW…DPHF), 616–648 (YGFT…DSRH), 649–682 (YNAW…NPSN), 684–716 (VLIC…APHS), and 751–784 (ANVH…DPKA).

It belongs to the APC3/CDC27 family.

It localises to the nucleus. Its function is as follows. Required for the completion of mitosis in Aspergillus nidulans. This chain is Protein bimA (bimA), found in Emericella nidulans (strain FGSC A4 / ATCC 38163 / CBS 112.46 / NRRL 194 / M139) (Aspergillus nidulans).